Reading from the N-terminus, the 129-residue chain is 3-aminoacrylate deaminase RutC (129 aa).

Belongs to the RutC family.

It carries out the reaction (Z)-3-aminoacrylate + H2O + H(+) = 3-oxopropanoate + NH4(+). In terms of biological role, involved in pyrimidine catabolism. Catalyzes the deamination of 3-aminoacrylate to malonic semialdehyde, a reaction that can also occur spontaneously. RutC may facilitate the reaction and modulate the metabolic fitness, rather than catalyzing essential functions. This is 3-aminoacrylate deaminase RutC from Rhizobium rhizogenes (strain K84 / ATCC BAA-868) (Agrobacterium radiobacter).